Reading from the N-terminus, the 2148-residue chain is General transcription factor 3C polypeptide 1 (2148 aa).

Positions 473–487 are enriched in acidic residues; that stretch reads GEEAFLSDSESEEES. Disordered regions lie at residues 473 to 568 and 587 to 609; these read GEEA…FDPH and NPKE…KPHK. The segment covering 491–502 has biased composition (basic residues); the sequence is GKRRGRGSRGHS. Lys533 is covalently cross-linked (Glycyl lysine isopeptide (Lys-Gly) (interchain with G-Cter in SUMO2)). Position 666 is a phosphoserine (Ser666). Disordered stretches follow at residues 717–771 and 818–863; these read STAN…EKMG and TGEQ…SSWE. 2 stretches are compositionally biased toward basic and acidic residues: residues 759–770 and 825–835; these read ESTRVKKTDEKM and HSERKTGKQEP. Glycyl lysine isopeptide (Lys-Gly) (interchain with G-Cter in SUMO2) cross-links involve residues Lys769 and Lys832. Ser1062 bears the Phosphoserine mark. Residues 1186–1195 are compositionally biased toward basic and acidic residues; that stretch reads EHFELDREPT. Disordered stretches follow at residues 1186–1238, 1597–1627, 1823–1881, 1893–1928, and 2127–2148; these read EHFE…KKLR, KSLG…SVEV, KASG…LPAK, SPRP…ESVG, and PRPS…ATSR. Residue Thr1195 is modified to Phosphothreonine. The segment covering 1198–1214 has biased composition (basic residues); sequence RNRKVRGGKSQKRKRLK. The segment covering 1228-1238 has biased composition (basic and acidic residues); sequence EHPEAKSKKLR. Acidic residues predominate over residues 1605 to 1616; sequence LDDDDEEEDLDE. Phosphoserine occurs at positions 1624, 1853, and 1893. Low complexity predominate over residues 1903–1912; sequence EAQAQFAAPE. The segment covering 2132–2148 has biased composition (polar residues); sequence SCYQSSAQPSTGVATSR.

This sequence belongs to the TFIIIC subunit 1 family. Part of the TFIIIC subcomplex TFIIIC2, consisting of six subunits, GTF3C1, GTF3C2, GTF3C3, GTF3C4, GTF3C5 and GTF3C6. Interacts with IGHMBP2. Interacts with MAF1.

Its subcellular location is the nucleus. Its function is as follows. Required for RNA polymerase III-mediated transcription. Component of TFIIIC that initiates transcription complex assembly on tRNA and is required for transcription of 5S rRNA and other stable nuclear and cytoplasmic RNAs. Binds to the box B promoter element. This chain is General transcription factor 3C polypeptide 1 (Gtf3c1), found in Rattus norvegicus (Rat).